A 466-amino-acid chain; its full sequence is Aladin (466 aa).

WD repeat units lie at residues 135–174 (WLNS…TTAT), 179–218 (PSQT…HLGR), 229–269 (PNNL…MQPL), 271–310 (RLGP…TTER), and 378–418 (LVGG…FDLQ).

It localises to the nucleus. It is found in the nuclear pore complex. The protein resides in the cytoplasm. Its subcellular location is the cytoskeleton. The protein localises to the spindle. Involved in mitotic spindle assembly. This chain is Aladin, found in Drosophila melanogaster (Fruit fly).